Consider the following 637-residue polypeptide: Nuclear receptor-binding protein homolog (637 aa).

A compositionally biased stretch (polar residues) spans 1-14; it reads MSNSQANAGISGST. Disordered regions lie at residues 1 to 60 and 74 to 99; these read MSNS…TADA and SEGVNLDSSPRESGDDSEDESEILEE. Residues 36–46 show a composition bias toward low complexity; it reads PAATPPSQSTQ. A compositionally biased stretch (acidic residues) spans 88-98; that stretch reads DDSEDESEILE. Residues 109-375 form the Protein kinase domain; sequence REEVDQRDVP…ANDLLFHPLL (267 aa). Disordered regions lie at residues 465 to 489 and 617 to 637; these read PNFRSRAASPERADSVKSATPEPVD and PQEQQNADGDVDVEHSGTTSN. 3 positions are modified to phosphoserine: Ser-473, Ser-479, and Ser-482. Phosphothreonine is present on Thr-484.

It belongs to the protein kinase superfamily. Ser/Thr protein kinase family.

It localises to the cytoplasm. It is found in the cell cortex. Functionally, may play a role in subcellular trafficking between the endoplasmic reticulum and Golgi apparatus. This is Nuclear receptor-binding protein homolog from Drosophila melanogaster (Fruit fly).